Reading from the N-terminus, the 137-residue chain is Protein shisa-5 (137 aa).

The helical transmembrane segment at 3–23 (FGATLAVGLTIFVLSVVTIII) threads the bilayer.

It belongs to the shisa family. As to quaternary structure, interacts with PDCD6; PDCD6 can stabilize SHISA5.

It localises to the endoplasmic reticulum membrane. Its subcellular location is the nucleus membrane. Functionally, can induce apoptosis in a caspase-dependent manner and plays a role in p53/TP53-dependent apoptosis. The chain is Protein shisa-5 (SHISA5) from Pongo abelii (Sumatran orangutan).